Reading from the N-terminus, the 430-residue chain is Probable GPI-anchored adhesin-like protein PGA32 (430 aa).

The first 16 residues, M1 to G16, serve as a signal peptide directing secretion. Disordered stretches follow at residues L88 to N195, I232 to K257, G278 to F302, and S314 to D336. 2 stretches are compositionally biased toward low complexity: residues T92–S112 and T122–R135. Residues T141–N167 show a composition bias toward polar residues. 2 stretches are compositionally biased toward low complexity: residues S168 to S187 and A233 to A253. A compositionally biased stretch (polar residues) spans Y289 to F302. Residues S314–T335 show a composition bias toward low complexity. The GPI-anchor amidated glycine moiety is linked to residue G401. A propeptide spans D402–T430 (removed in mature form).

Its subcellular location is the cell membrane. Putative adhesin which is involved in cell adhesion and virulence. The polypeptide is Probable GPI-anchored adhesin-like protein PGA32 (PGA32) (Candida albicans (strain SC5314 / ATCC MYA-2876) (Yeast)).